The chain runs to 86 residues: Kappa-theraphotoxin-Cg1a 4 (86 aa).

A signal peptide spans 1–21 (MKASVLITLAVLGVMFVWASA). The propeptide occupies 22 to 50 (AELEERGSDQRDSPAWLKSMERIFQSEER). 3 cysteine pairs are disulfide-bonded: cysteine 52–cysteine 66, cysteine 59–cysteine 71, and cysteine 65–cysteine 78. Phenylalanine 84 is modified (phenylalanine amide).

The protein belongs to the neurotoxin 10 (Hwtx-1) family. 28 (Jztx-11) subfamily. Expressed by the venom gland.

It is found in the secreted. Functionally, this toxin acts as a voltage-dependent gating-modifier. It inhibits the sodium conductance (IC(50)=124 nM) and slows the fast inactivation (EC(50)=1180 nM) of Nav1.5/SCN5A. It significantly shifts the activation to more depolarized voltages and decreases the deactivation of Nav1.5 currents upon extreme depolarization, but only slightly affects voltage-dependence of steady-state inactivation. In addition, this toxin causes an approximately five-fold decrease in the rate of recovery from inactivation and an approximately 1.9-fold reduction in the closed-state inactivation rate. This toxin integrates the functions of site 3 toxins (alpha-scorpion toxins) with site 4 toxins (beta-scorpion and spider toxins) by targeting multiple sites on Nav1.5. Also shows inhibition of voltage-gated potassium channels (5 uM completely inhibits Kv2.1/KCNB1, whereas 5 uM moderately inhibits Kv4.2/KCND2 Kv4.1/KCND1 channels). The protein is Kappa-theraphotoxin-Cg1a 4 of Chilobrachys guangxiensis (Chinese earth tiger tarantula).